Reading from the N-terminus, the 424-residue chain is Serine--tRNA ligase (424 aa).

An L-serine-binding site is contributed by 231–233; sequence TAE. Residue 262–264 coordinates ATP; sequence RSE. Glu-285 provides a ligand contact to L-serine. ATP is bound at residue 349–352; sequence EISS. Ser-385 provides a ligand contact to L-serine.

Belongs to the class-II aminoacyl-tRNA synthetase family. Type-1 seryl-tRNA synthetase subfamily. In terms of assembly, homodimer. The tRNA molecule binds across the dimer.

It is found in the cytoplasm. It carries out the reaction tRNA(Ser) + L-serine + ATP = L-seryl-tRNA(Ser) + AMP + diphosphate + H(+). The catalysed reaction is tRNA(Sec) + L-serine + ATP = L-seryl-tRNA(Sec) + AMP + diphosphate + H(+). Its pathway is aminoacyl-tRNA biosynthesis; selenocysteinyl-tRNA(Sec) biosynthesis; L-seryl-tRNA(Sec) from L-serine and tRNA(Sec): step 1/1. Its function is as follows. Catalyzes the attachment of serine to tRNA(Ser). Is also able to aminoacylate tRNA(Sec) with serine, to form the misacylated tRNA L-seryl-tRNA(Sec), which will be further converted into selenocysteinyl-tRNA(Sec). This is Serine--tRNA ligase from Bacillus cereus (strain AH187).